Here is a 105-residue protein sequence, read N- to C-terminus: uncharacterized protein (105 aa).

Residues 1 to 19 (MKLVFIFATAAIMGVVVYG) form the signal peptide.

This is an uncharacterized protein from Magallana gigas (Pacific oyster).